A 228-amino-acid chain; its full sequence is Octanoyltransferase (228 aa).

Positions Asp32–Trp214 constitute a BPL/LPL catalytic domain. Substrate contacts are provided by residues Arg77–His84, Ser144–Gly146, and Gly157–Ala159. Cys175 acts as the Acyl-thioester intermediate in catalysis.

Belongs to the LipB family.

The protein resides in the cytoplasm. The enzyme catalyses octanoyl-[ACP] + L-lysyl-[protein] = N(6)-octanoyl-L-lysyl-[protein] + holo-[ACP] + H(+). The protein operates within protein modification; protein lipoylation via endogenous pathway; protein N(6)-(lipoyl)lysine from octanoyl-[acyl-carrier-protein]: step 1/2. Functionally, catalyzes the transfer of endogenously produced octanoic acid from octanoyl-acyl-carrier-protein onto the lipoyl domains of lipoate-dependent enzymes. Lipoyl-ACP can also act as a substrate although octanoyl-ACP is likely to be the physiological substrate. The protein is Octanoyltransferase of Syntrophobacter fumaroxidans (strain DSM 10017 / MPOB).